We begin with the raw amino-acid sequence, 126 residues long: Protein ApaG (126 aa).

One can recognise an ApaG domain in the interval serine 2 to histidine 126.

This is Protein ApaG from Shewanella baltica (strain OS223).